The following is a 913-amino-acid chain: MSRFFTTGSDSESESSLSGEELVTKPVGGNYGKQPLLLSEDEEDTKRVVRSAKDKRFEELTNLIRTIRNAMKIRDVTKCLEEFELLGKAYGKAKSIVDKEGVPRFYIRILADLEDYLNELWEDKEGKKKMNKNNAKALSTLRQKIRKYNRDFESHITSYKQNPEQSADEDAEKNEEDSEGSSDEDEDEDGVSAATFLKKKSEAPSGESRKFLKKMDDEDEDSEDSEDDEDWDTGSTSSDSDSEEEEGKQTALASRFLKKAPTTDEDKKAAEKKREDKAKKKHDRKSKRLDEEEEDNEGGEWERVRGGVPLVKEKPKMFAKGTEITHAVVIKKLNEILQARGKKGTDRAAQIELLQLLVQIAAENNLGEGVIVKIKFNIIASLYDYNPNLATYMKPEMWGKCLDCINELMDILFANPNIFVGENILEESENLHNADQPLRVRGCILTLVERMDEEFTKIMQNTDPHSQEYVEHLKDEAQVCAIIERVQRYLEEKGTTEEVCRIYLLRILHTYYKFDYKAHQRQLTPPEGSSKSEQDQAENEGEDSAVLMERLCKYIYAKDRTDRIRTCAILCHIYHHALHSRWYQARDLMLMSHLQDNIQHADPPVQILYNRTMVQLGICAFRQGLTKDAHNALLDIQSSGRAKELLGQGLLLRSLQERNQEQEKVERRRQVPFHLHINLELLECVYLVSAMLLEIPYMAAHESDARRRMISKQFHHQLRVGERQPLLGPPESMREHVVAASKAMKMGDWKTCHSFIINEKMNGKVWDLFPEADKVRTMLVRKIQEESLRTYLFTYSSVYDSISMETLSDMFELDLPTVHSIISKMIINEELMASLDQPTQTVVMHRTEPTAQQNLALQLAEKLGSLVENNERVFDHKQGTYGGYFRDQKDGYRKNEGYMRRGGYRQQQSQTAY.

A disordered region spans residues 1–44 (MSRFFTTGSDSESESSLSGEELVTKPVGGNYGKQPLLLSEDEED). Low complexity predominate over residues 8–21 (GSDSESESSLSGEE). A phosphoserine mark is found at Ser-9, Ser-11, Ser-13, Ser-15, Ser-16, Ser-18, and Ser-39. Residue Lys-99 is modified to N6-acetyllysine. Disordered regions lie at residues 157 to 301 (TSYK…GGEW) and 522 to 542 (QLTP…NEGE). Phosphoserine occurs at positions 166, 178, 181, and 182. Residues 166 to 190 (SADEDAEKNEEDSEGSSDEDEDEDG) are compositionally biased toward acidic residues. Over residues 199–216 (KKSEAPSGESRKFLKKMD) the composition is skewed to basic and acidic residues. A compositionally biased stretch (acidic residues) spans 217-232 (DEDEDSEDSEDDEDWD). A compositionally biased stretch (basic and acidic residues) spans 261-278 (PTTDEDKKAAEKKREDKA). Residues 522–531 (QLTPPEGSSK) show a composition bias toward polar residues. Thr-524 is subject to Phosphothreonine. Lys-643 bears the N6-acetyllysine mark. In terms of domain architecture, PCI spans 673-849 (FHLHINLELL…QTVVMHRTEP (177 aa)). Residues 885–913 (FRDQKDGYRKNEGYMRRGGYRQQQSQTAY) form a disordered region. The segment covering 886-899 (RDQKDGYRKNEGYM) has biased composition (basic and acidic residues). A Phosphoserine modification is found at Ser-909.

As to quaternary structure, component of the eukaryotic translation initiation factor 3 (eIF-3) complex, which is composed of 13 subunits: EIF3A, EIF3B, EIF3C, EIF3D, EIF3E, EIF3F, EIF3G, EIF3H, EIF3I, EIF3J, EIF3K, EIF3L and EIF3M. The eIF-3 complex appears to include 3 stable modules: module A is composed of EIF3A, EIF3B, EIF3G and EIF3I; module B is composed of EIF3F, EIF3H, and EIF3M; and module C is composed of EIF3C, EIF3D, EIF3E, EIF3K and EIF3L. EIF3C of module C binds EIF3B of module A and EIF3H of module B, thereby linking the three modules. EIF3J is a labile subunit that binds to the eIF-3 complex via EIF3B. The eIF-3 complex interacts with RPS6KB1 under conditions of nutrient depletion. Mitogenic stimulation leads to binding and activation of a complex composed of MTOR and RPTOR, leading to phosphorylation and release of RPS6KB1 and binding of EIF4B to eIF-3. Identified in a HCV IRES-mediated translation complex, at least composed of EIF3C, IGF2BP1, RPS3 and HCV RNA-replicon. Interacts with ALKBH4, IFIT1 and IFIT2. Interacts with BZW2/5MP1. Phosphorylated. Phosphorylation is enhanced upon serum stimulation.

The protein resides in the cytoplasm. Its function is as follows. Component of the eukaryotic translation initiation factor 3 (eIF-3) complex, which is required for several steps in the initiation of protein synthesis. The eIF-3 complex associates with the 40S ribosome and facilitates the recruitment of eIF-1, eIF-1A, eIF-2:GTP:methionyl-tRNAi and eIF-5 to form the 43S pre-initiation complex (43S PIC). The eIF-3 complex stimulates mRNA recruitment to the 43S PIC and scanning of the mRNA for AUG recognition. The eIF-3 complex is also required for disassembly and recycling of post-termination ribosomal complexes and subsequently prevents premature joining of the 40S and 60S ribosomal subunits prior to initiation. The eIF-3 complex specifically targets and initiates translation of a subset of mRNAs involved in cell proliferation, including cell cycling, differentiation and apoptosis, and uses different modes of RNA stem-loop binding to exert either translational activation or repression. This is Eukaryotic translation initiation factor 3 subunit C from Homo sapiens (Human).